A 162-amino-acid chain; its full sequence is MTTNIVLETTMGSLILELYTTHAPKTCNNFTTLVRRGYYDNTIFHRIIPNFMVQGGDPTGTGRGGSSIFGEKFEDEIDPGLKHTGAGILSMANAGPNTNGSQFFVTLAPTPWLDGKHTIFGRVKSGMGTIKRMGLVKTGSEDRPVEEVKIVKARVVEEEEQI.

Residues 1–155 form the PPIase cyclophilin-type domain; that stretch reads MTTNIVLETT…EEVKIVKARV (155 aa).

It belongs to the cyclophilin-type PPIase family. PPIL1 subfamily.

It carries out the reaction [protein]-peptidylproline (omega=180) = [protein]-peptidylproline (omega=0). In terms of biological role, PPIases accelerate the folding of proteins. It catalyzes the cis-trans isomerization of proline imidic peptide bonds in oligopeptides. This chain is Peptidyl-prolyl cis-trans isomerase-like 1 (CYP1), found in Gibberella zeae (strain ATCC MYA-4620 / CBS 123657 / FGSC 9075 / NRRL 31084 / PH-1) (Wheat head blight fungus).